We begin with the raw amino-acid sequence, 941 residues long: Bifunctional glutamine synthetase adenylyltransferase/adenylyl-removing enzyme (941 aa).

The interval 1-437 is adenylyl removase; that stretch reads MSIPTASLSP…TAEFAELLAP (437 aa). The tract at residues 444 to 941 is adenylyl transferase; that stretch reads PDTLADYWRA…FPLGKDEAAL (498 aa).

It belongs to the GlnE family. Requires Mg(2+) as cofactor.

It catalyses the reaction [glutamine synthetase]-O(4)-(5'-adenylyl)-L-tyrosine + phosphate = [glutamine synthetase]-L-tyrosine + ADP. The catalysed reaction is [glutamine synthetase]-L-tyrosine + ATP = [glutamine synthetase]-O(4)-(5'-adenylyl)-L-tyrosine + diphosphate. In terms of biological role, involved in the regulation of glutamine synthetase GlnA, a key enzyme in the process to assimilate ammonia. When cellular nitrogen levels are high, the C-terminal adenylyl transferase (AT) inactivates GlnA by covalent transfer of an adenylyl group from ATP to specific tyrosine residue of GlnA, thus reducing its activity. Conversely, when nitrogen levels are low, the N-terminal adenylyl removase (AR) activates GlnA by removing the adenylyl group by phosphorolysis, increasing its activity. The regulatory region of GlnE binds the signal transduction protein PII (GlnB) which indicates the nitrogen status of the cell. The protein is Bifunctional glutamine synthetase adenylyltransferase/adenylyl-removing enzyme of Xanthomonas oryzae pv. oryzae (strain MAFF 311018).